A 276-amino-acid polypeptide reads, in one-letter code: Mitochondrial outer membrane protein porin of 36 kDa (276 aa).

Belongs to the eukaryotic mitochondrial porin (TC 1.B.8.1) family.

The protein resides in the mitochondrion outer membrane. Its function is as follows. Forms a channel through the cell membrane that allows diffusion of small hydrophilic molecules. The channel adopts an open conformation at low or zero membrane potential and a closed conformation at potentials above 30-40 mV. The open state has a weak anion selectivity whereas the closed state is cation-selective. This is Mitochondrial outer membrane protein porin of 36 kDa from Solanum tuberosum (Potato).